A 245-amino-acid polypeptide reads, in one-letter code: MDAATIRETAFAMPLTSPGFPKGPYRFVNREYMIITYRTDRAALEKIVPEPLELADDVVKYEFIRMPDSTGFGDYTESGQVIPVRYKGKPGVYVHSMFLNDHPPIAGGREIWGFPKKLARPVLEVEIDTLVGTLDYGRIRVATGTMGYKHHTLDHDPVLSSMHEPNFLLKIIPHVDGSPRICELVRYHMSDIVLKGAWTGPAALALYPHALAPVADLPVREVVAASHILADMTLDLGEVVHDYLA.

K116 acts as the Schiff-base intermediate with acetoacetate in catalysis.

It belongs to the ADC family.

The enzyme catalyses acetoacetate + H(+) = acetone + CO2. Its function is as follows. Catalyzes the conversion of acetoacetate to acetone and carbon dioxide. The chain is Acetoacetate decarboxylase from Acidiphilium cryptum (strain JF-5).